The following is a 67-amino-acid chain: Protein C' (67 aa).

Belongs to the rhabdoviruses C protein family.

Its function is as follows. Seems to stimulates transcription by the viral polymerase. May play a role in viral pathogenesis or transmission by insects vectors. This is Protein C' (P) from Aedes (Bovine).